The sequence spans 293 residues: Putative phosphoenolpyruvate synthase regulatory protein (293 aa).

173–180 contacts ADP; the sequence is GVSRCGKT.

The protein belongs to the pyruvate, phosphate/water dikinase regulatory protein family. PSRP subfamily.

The catalysed reaction is [pyruvate, water dikinase] + ADP = [pyruvate, water dikinase]-phosphate + AMP + H(+). The enzyme catalyses [pyruvate, water dikinase]-phosphate + phosphate + H(+) = [pyruvate, water dikinase] + diphosphate. Bifunctional serine/threonine kinase and phosphorylase involved in the regulation of the phosphoenolpyruvate synthase (PEPS) by catalyzing its phosphorylation/dephosphorylation. The protein is Putative phosphoenolpyruvate synthase regulatory protein of Photorhabdus laumondii subsp. laumondii (strain DSM 15139 / CIP 105565 / TT01) (Photorhabdus luminescens subsp. laumondii).